Reading from the N-terminus, the 281-residue chain is Acetyl-coenzyme A carboxylase carboxyl transferase subunit beta (281 aa).

Residues 23–281 (LWSKCEDCGA…KTLAMMRVEG (259 aa)) enclose the CoA carboxyltransferase N-terminal domain. Positions 27, 30, 46, and 49 each coordinate Zn(2+). Residues 27 to 49 (CEDCGAMLHRRQLEENLNTCNEC) form a C4-type zinc finger.

It belongs to the AccD/PCCB family. In terms of assembly, acetyl-CoA carboxylase is a heterohexamer composed of biotin carboxyl carrier protein (AccB), biotin carboxylase (AccC) and two subunits each of ACCase subunit alpha (AccA) and ACCase subunit beta (AccD). Zn(2+) is required as a cofactor.

It is found in the cytoplasm. It carries out the reaction N(6)-carboxybiotinyl-L-lysyl-[protein] + acetyl-CoA = N(6)-biotinyl-L-lysyl-[protein] + malonyl-CoA. It functions in the pathway lipid metabolism; malonyl-CoA biosynthesis; malonyl-CoA from acetyl-CoA: step 1/1. Functionally, component of the acetyl coenzyme A carboxylase (ACC) complex. Biotin carboxylase (BC) catalyzes the carboxylation of biotin on its carrier protein (BCCP) and then the CO(2) group is transferred by the transcarboxylase to acetyl-CoA to form malonyl-CoA. The sequence is that of Acetyl-coenzyme A carboxylase carboxyl transferase subunit beta from Chlorobium luteolum (strain DSM 273 / BCRC 81028 / 2530) (Pelodictyon luteolum).